Here is a 444-residue protein sequence, read N- to C-terminus: Transcription activator AKTR-3 (444 aa).

The segment at residues Cys-16 to Cys-43 is a DNA-binding region (zn(2)-C6 fungal-type). The disordered stretch occupies residues Arg-49 to Ser-89. Positions Arg-50–Arg-59 are enriched in basic residues. The span at Pro-76 to Ser-89 shows a compositional bias: polar residues.

The protein localises to the nucleus. Transcription factor that regulates the expression of the gene clusters that mediate the biosynthesis of the host-selective toxins (HSTs) AK-toxins responsible for Japanese pear black spot disease by the Japanese pear pathotype. AK-toxins are esters of 9,10-epoxy 8-hydroxy 9-methyldecatrienoic acid (EDA). On cellular level, AK-toxins affect plasma membrane of susceptible cells and cause a sudden increase in loss of K(+) after a few minutes of toxin treatment. The polypeptide is Transcription activator AKTR-3 (Alternaria alternata (Alternaria rot fungus)).